A 260-amino-acid polypeptide reads, in one-letter code: Type III pantothenate kinase (260 aa).

6–13 is an ATP binding site; it reads DAGNTRIK. Substrate-binding positions include Tyr100 and 107–110; that span reads GADR. Asp109 (proton acceptor) is an active-site residue. Thr133 provides a ligand contact to ATP. A substrate-binding site is contributed by Thr186.

Belongs to the type III pantothenate kinase family. Homodimer. NH4(+) is required as a cofactor. Requires K(+) as cofactor.

The protein localises to the cytoplasm. The enzyme catalyses (R)-pantothenate + ATP = (R)-4'-phosphopantothenate + ADP + H(+). The protein operates within cofactor biosynthesis; coenzyme A biosynthesis; CoA from (R)-pantothenate: step 1/5. Functionally, catalyzes the phosphorylation of pantothenate (Pan), the first step in CoA biosynthesis. This Janthinobacterium sp. (strain Marseille) (Minibacterium massiliensis) protein is Type III pantothenate kinase.